The sequence spans 313 residues: MKEKIVIALGGNAIQTTEATAEAQQTAIRCAMQNLKPLFDSPARIVISHGNGPQIGSLLIQQAKSNSDTTPAMPLDTCGAMSQGMIGYWLETEINRILTEMNSDRTVGTIVTRVEVDKDDPRFDNPTKPIGPFYTKEEVEELQKEQPDSVFKEDAGRGYRKVVASPLPQSILEHQLIRTLADGKNIVIACGGGGIPVIKKENTYEGVEAVIDKDFASEKLATLIEADTLMILTNVENVFINFNEPNQQQIDDIDVATLKKYAAQGKFVEGSMLPKIEAAIRFVESGENKKVIITNLEQAYEALIGNKGTHIHM.

This sequence belongs to the carbamate kinase family.

It is found in the cytoplasm. It carries out the reaction hydrogencarbonate + NH4(+) + ATP = carbamoyl phosphate + ADP + H2O + H(+). It functions in the pathway metabolic intermediate metabolism; carbamoyl phosphate degradation; CO(2) and NH(3) from carbamoyl phosphate: step 1/1. The sequence is that of Carbamate kinase 2 (arcC2) from Staphylococcus aureus (strain USA300).